Consider the following 1094-residue polypeptide: Protein phosphatase 2C and cyclic nucleotide-binding/kinase domain-containing protein (1094 aa).

The PPM-type phosphatase domain maps to 107–397; it reads RCSFLSQRGY…DDITIIVVHI (291 aa). Mn(2+) contacts are provided by Asp148, Gly149, Asp344, and Asp388. A nucleoside 3',5'-cyclic phosphate is bound by residues 491 to 616 and 617 to 758; these read LFRK…RSVD and LLSR…RHSS. In terms of domain architecture, Protein kinase spans 785 to 1038; that stretch reads TTCLSTTDCS…PESIKKHPWF (254 aa). ATP-binding positions include 791 to 799 and Lys811; that span reads TDCSEIGLV.

The protein in the N-terminal section; belongs to the PP2C family. It in the C-terminal section; belongs to the protein kinase superfamily. AGC Ser/Thr protein kinase family. Mg(2+) is required as a cofactor. Requires Mn(2+) as cofactor.

It catalyses the reaction O-phospho-L-seryl-[protein] + H2O = L-seryl-[protein] + phosphate. The enzyme catalyses O-phospho-L-threonyl-[protein] + H2O = L-threonyl-[protein] + phosphate. This Arabidopsis thaliana (Mouse-ear cress) protein is Protein phosphatase 2C and cyclic nucleotide-binding/kinase domain-containing protein.